Reading from the N-terminus, the 64-residue chain is Large ribosomal subunit protein uL29 (64 aa).

This sequence belongs to the universal ribosomal protein uL29 family.

This is Large ribosomal subunit protein uL29 from Nitrosomonas europaea (strain ATCC 19718 / CIP 103999 / KCTC 2705 / NBRC 14298).